A 489-amino-acid chain; its full sequence is Cysteine--tRNA ligase (489 aa).

Cysteine 27 contacts Zn(2+). The short motif at valine 29–histidine 39 is the 'HIGH' region element. Zn(2+) is bound by residues cysteine 211, histidine 236, and glutamate 240. The 'KMSKS' region signature appears at lysine 268 to serine 272. Residue lysine 271 coordinates ATP.

This sequence belongs to the class-I aminoacyl-tRNA synthetase family. As to quaternary structure, monomer. Zn(2+) serves as cofactor.

It localises to the cytoplasm. It catalyses the reaction tRNA(Cys) + L-cysteine + ATP = L-cysteinyl-tRNA(Cys) + AMP + diphosphate. This Prochlorococcus marinus (strain MIT 9312) protein is Cysteine--tRNA ligase.